The sequence spans 286 residues: 4-diphosphocytidyl-2-C-methyl-D-erythritol kinase (286 aa).

The active site involves K11. 94 to 104 (PMGGGIGGGSS) lines the ATP pocket. D136 is an active-site residue.

The protein belongs to the GHMP kinase family. IspE subfamily.

It carries out the reaction 4-CDP-2-C-methyl-D-erythritol + ATP = 4-CDP-2-C-methyl-D-erythritol 2-phosphate + ADP + H(+). The protein operates within isoprenoid biosynthesis; isopentenyl diphosphate biosynthesis via DXP pathway; isopentenyl diphosphate from 1-deoxy-D-xylulose 5-phosphate: step 3/6. Functionally, catalyzes the phosphorylation of the position 2 hydroxy group of 4-diphosphocytidyl-2C-methyl-D-erythritol. The sequence is that of 4-diphosphocytidyl-2-C-methyl-D-erythritol kinase from Pseudomonas putida (strain ATCC 700007 / DSM 6899 / JCM 31910 / BCRC 17059 / LMG 24140 / F1).